We begin with the raw amino-acid sequence, 97 residues long: Large ribosomal subunit protein uL23 (97 aa).

The protein belongs to the universal ribosomal protein uL23 family. Part of the 50S ribosomal subunit. Contacts protein L29, and trigger factor when it is bound to the ribosome.

One of the early assembly proteins it binds 23S rRNA. One of the proteins that surrounds the polypeptide exit tunnel on the outside of the ribosome. Forms the main docking site for trigger factor binding to the ribosome. This is Large ribosomal subunit protein uL23 from Sinorhizobium medicae (strain WSM419) (Ensifer medicae).